The following is a 616-amino-acid chain: Mitochondrial Rho GTPase 2 (616 aa).

Over 1 to 590 (MKRDVRILLL…HDTELSTASF (590 aa)) the chain is Cytoplasmic. One can recognise a Miro 1 domain in the interval 2–168 (KRDVRILLLG…FYYAQKAVLH (167 aa)). GTP contacts are provided by G16, K17, T18, and S19. A Mg(2+)-binding site is contributed by T18. D57 is a Mg(2+) binding site. Positions 59, 118, 119, 121, 149, and 150 each coordinate GTP. 2 consecutive EF-hand domains span residues 184–219 (QCKK…CFGN) and 304–339 (FGYQ…FPYT). 7 residues coordinate Ca(2+): D199, N201, E208, D317, D319, D321, and E328. The Miro 2 domain maps to 416–577 (RNVFLCRVIG…YSKLATAAAF (162 aa)). 5 residues coordinate GTP: G428, G430, K431, S432, and A433. S432 is a binding site for Mg(2+). E474 provides a ligand contact to Mg(2+). K528, D530, and C559 together coordinate GTP. The chain crosses the membrane as a helical; Anchor for type IV membrane protein span at residues 591-613 (WLRVALGATVAAVVGFTLYKALL). Residues 614 to 616 (RSK) are Mitochondrial intermembrane-facing.

This sequence belongs to the mitochondrial Rho GTPase family. As to quaternary structure, homodimer.

It is found in the mitochondrion outer membrane. The catalysed reaction is GTP + H2O = GDP + phosphate + H(+). The enzyme catalyses ATP + H2O = ADP + phosphate + H(+). It carries out the reaction UTP + H2O = UDP + phosphate + H(+). In terms of biological role, atypical mitochondrial nucleoside-triphosphatase (NTPase) involved in mitochondrial trafficking. Probably involved in control of anterograde transport of mitochondria and their subcellular distribution. Can hydrolyze GTP, ATP and UTP. The chain is Mitochondrial Rho GTPase 2 (rhot2) from Xenopus tropicalis (Western clawed frog).